The primary structure comprises 341 residues: L-threonine 3-dehydrogenase (341 aa).

C38 contacts Zn(2+). Residues T40 and H43 each act as charge relay system in the active site. Residues H63, E64, C93, C96, C99, and C107 each contribute to the Zn(2+) site. NAD(+) contacts are provided by residues I175, D195, R200, 262-264, and 286-287; these read LGI and IY.

It belongs to the zinc-containing alcohol dehydrogenase family. In terms of assembly, homotetramer. Requires Zn(2+) as cofactor.

Its subcellular location is the cytoplasm. The enzyme catalyses L-threonine + NAD(+) = (2S)-2-amino-3-oxobutanoate + NADH + H(+). It participates in amino-acid degradation; L-threonine degradation via oxydo-reductase pathway; glycine from L-threonine: step 1/2. In terms of biological role, catalyzes the NAD(+)-dependent oxidation of L-threonine to 2-amino-3-ketobutyrate. The chain is L-threonine 3-dehydrogenase from Shewanella putrefaciens (strain CN-32 / ATCC BAA-453).